The primary structure comprises 332 residues: Ribosomal RNA small subunit methyltransferase H (332 aa).

Residues 36 to 38 (GGY), D54, F81, D102, and Q109 each bind S-adenosyl-L-methionine. The tract at residues 295–322 (PRARSAKLRGAERTESPAHAAGDLPGWP) is disordered.

The protein belongs to the methyltransferase superfamily. RsmH family.

It localises to the cytoplasm. The enzyme catalyses cytidine(1402) in 16S rRNA + S-adenosyl-L-methionine = N(4)-methylcytidine(1402) in 16S rRNA + S-adenosyl-L-homocysteine + H(+). In terms of biological role, specifically methylates the N4 position of cytidine in position 1402 (C1402) of 16S rRNA. The polypeptide is Ribosomal RNA small subunit methyltransferase H (Rhodopseudomonas palustris (strain ATCC BAA-98 / CGA009)).